Reading from the N-terminus, the 561-residue chain is MDHERLKSALAVLTVDPAAVGGLWLRSRAGPIRLAFTDTLAKLPFPMALRRLPPNVDDGALYGGLDVAETLHSGKPVLKGGLLDRPSVFILPMAERCTAKLGARLAQALDLRQHALIALDEAAEPDEALPHAVADRLGLFVDLSEVRSIDGPGLLPETAQIERARELLPQVQMPAERVSEIVEGCRQLGISSLRAPMLALTAARILTALSGRTRVEAEDVLHAAELTLAHRALPLQEAPPPPPPPPEPPEPNEGENQQDEQDQIDPLDGIPPEIVVEAVRAMLPDNILQTLNMGSRLRAASGGQGAGQEQIGNRRGRPLPSRKGKLEDDAKIDLVATLRSAAPWQGLRRRQAPAGTERVLLVESSDIHIKRRKEMSDRVLIFAVDASGSAAVARLSEAKGAVELLLGRAYAARDHVSLITFRGTAAQVLLQPSRSLTQTKRQLQGLPGGGGTPLASGMEMAMVTAKQARSRGMTPTIALLTDGRGNIALDGTANRELAGEQATKVARAIRASGMPAVIIDTAMRPNPALVDLARTMDAHYIALPRATAHKMADVLGAALEA.

Disordered stretches follow at residues 234–268 and 298–324; these read PLQEAPPPPPPPPEPPEPNEGENQQDEQDQIDPLD and RAASGGQGAGQEQIGNRRGRPLPSRKG. Residues 237–249 show a composition bias toward pro residues; that stretch reads EAPPPPPPPPEPP. Residues 250 to 265 show a composition bias toward acidic residues; that stretch reads EPNEGENQQDEQDQID. Basic residues predominate over residues 314-323; that stretch reads RRGRPLPSRK. Residues 379 to 559 form the VWFA domain; sequence VLIFAVDASG…KMADVLGAAL (181 aa).

The protein belongs to the Mg-chelatase subunits D/I family.

It catalyses the reaction protoporphyrin IX + Mg(2+) + ATP + H2O = Mg-protoporphyrin IX + ADP + phosphate + 3 H(+). It functions in the pathway porphyrin-containing compound metabolism; bacteriochlorophyll biosynthesis. In terms of biological role, involved in bacteriochlorophyll biosynthesis; introduces a magnesium ion into protoporphyrin IX to yield Mg-protoporphyrin IX. The polypeptide is Magnesium-chelatase 60 kDa subunit (bchD) (Rhodobacter capsulatus (strain ATCC BAA-309 / NBRC 16581 / SB1003)).